We begin with the raw amino-acid sequence, 121 residues long: Cell division protein FtsL (121 aa).

Residues 1 to 34 (MISRVTEALSKVKGSMGSHERHALPGVIGDDLLR) lie on the Cytoplasmic side of the membrane. Residues 35–57 (FGKLPLCLFICIILTAVTVVTTA) form a helical membrane-spanning segment. The Periplasmic segment spans residues 58-121 (HHTRLLTAQR…PSQENIVVQK (64 aa)).

Belongs to the FtsL family. Part of a complex composed of FtsB, FtsL and FtsQ.

The protein resides in the cell inner membrane. Its function is as follows. Essential cell division protein. May link together the upstream cell division proteins, which are predominantly cytoplasmic, with the downstream cell division proteins, which are predominantly periplasmic. The protein is Cell division protein FtsL of Shigella dysenteriae serotype 1 (strain Sd197).